The chain runs to 240 residues: UPF0173 metal-dependent hydrolase OE_2513F (240 aa).

Belongs to the UPF0173 family.

The chain is UPF0173 metal-dependent hydrolase OE_2513F from Halobacterium salinarum (strain ATCC 29341 / DSM 671 / R1).